We begin with the raw amino-acid sequence, 347 residues long: Probable E3 ubiquitin-protein ligase DTX3 (347 aa).

Positions 113-157 (EHPEMHRAGPPPLRAAPLLPPGARGLPPPPPPLPPPLPPRLREEA) are disordered. Over residues 121 to 151 (GPPPLRAAPLLPPGARGLPPPPPPLPPPLPP) the composition is skewed to pro residues. An RING-type zinc finger spans residues 164 to 205 (CPICLGEIQNAKTLEKCRHSFCEGCITRALQVKKACPMCGRF).

The protein belongs to the Deltex family. In terms of assembly, homodimer. May form a heterodimers with other members of the Deltex family. Interacts with NOTCH1.

The protein localises to the cytoplasm. The catalysed reaction is S-ubiquitinyl-[E2 ubiquitin-conjugating enzyme]-L-cysteine + [acceptor protein]-L-lysine = [E2 ubiquitin-conjugating enzyme]-L-cysteine + N(6)-ubiquitinyl-[acceptor protein]-L-lysine.. It participates in protein modification; protein ubiquitination. Functionally, regulator of Notch signaling, a signaling pathway involved in cell-cell communications that regulates a broad spectrum of cell-fate determinations. Probably acts both as a positive and negative regulator of Notch, depending on the developmental and cell context. Functions as an ubiquitin ligase protein in vitro, suggesting that it may regulate the Notch pathway via some ubiquitin ligase activity. This Homo sapiens (Human) protein is Probable E3 ubiquitin-protein ligase DTX3 (DTX3).